Here is a 303-residue protein sequence, read N- to C-terminus: Peroxisomal trans-2-enoyl-CoA reductase (303 aa).

23–47 (VTGGATGIGKAIVKELLELGSNVVI) contributes to the NADP(+) binding site. Lys-32 is subject to N6-succinyllysine. Position 49 is a phosphoserine (Ser-49). The active-site Proton acceptor is the Tyr-179. Tyr-179 bears the Phosphotyrosine mark. Positions 301–303 (AKL) match the Microbody targeting signal motif.

It belongs to the short-chain dehydrogenases/reductases (SDR) family. As to quaternary structure, interacts with PEX5, probably required to target it into peroxisomes.

Its subcellular location is the peroxisome. It catalyses the reaction a (2E)-enoyl-CoA + NADPH + H(+) = a 2,3-saturated acyl-CoA + NADP(+). It carries out the reaction (2E)-hexenoyl-CoA + NADPH + H(+) = hexanoyl-CoA + NADP(+). The enzyme catalyses (2E)-octenoyl-CoA + NADPH + H(+) = octanoyl-CoA + NADP(+). The catalysed reaction is (2E)-decenoyl-CoA + NADPH + H(+) = decanoyl-CoA + NADP(+). It catalyses the reaction (2E)-dodecenoyl-CoA + NADPH + H(+) = dodecanoyl-CoA + NADP(+). It carries out the reaction (2E)-tetradecenoyl-CoA + NADPH + H(+) = tetradecanoyl-CoA + NADP(+). The protein operates within lipid metabolism; fatty acid biosynthesis. In terms of biological role, participates in chain elongation of fatty acids. Catalyzes the reduction of trans-2-enoyl-CoAs of varying chain lengths from 6:1 to 16:1, having maximum activity with 10:1 CoA. Has no 2,4-dienoyl-CoA reductase activity. The sequence is that of Peroxisomal trans-2-enoyl-CoA reductase (PECR) from Pongo abelii (Sumatran orangutan).